Reading from the N-terminus, the 354-residue chain is Photosystem II protein D1 2 (354 aa).

3 helical membrane passes run 29 to 46 (YIGW…TATT), 118 to 133 (HFLI…EWEL), and 142 to 156 (WIAV…AATA). H118 provides a ligand contact to chlorophyll a. Y126 serves as a coordination point for pheophytin a. [CaMn4O5] cluster contacts are provided by D170 and E189. The helical transmembrane segment at 197-218 (FHQLGVAGVFGGALFSAMHGSL) threads the bilayer. H198 contributes to the chlorophyll a binding site. A quinone-binding positions include H215 and 264 to 265 (SF). Fe cation is bound at residue H215. Residue H272 coordinates Fe cation. A helical membrane pass occupies residues 274–288 (FLAAWPVIGIWFTAL). Residues H332, E333, D342, and A344 each contribute to the [CaMn4O5] cluster site. Positions 345-354 (AVEVAPAVRG) are excised as a propeptide.

This sequence belongs to the reaction center PufL/M/PsbA/D family. As to quaternary structure, PSII is composed of 1 copy each of membrane proteins PsbA, PsbB, PsbC, PsbD, PsbE, PsbF, PsbH, PsbI, PsbJ, PsbK, PsbL, PsbM, PsbT, PsbX, PsbY, PsbZ, Psb30/Ycf12, peripheral proteins PsbO, CyanoQ (PsbQ), PsbU, PsbV and a large number of cofactors. It forms dimeric complexes. It depends on The D1/D2 heterodimer binds P680, chlorophylls that are the primary electron donor of PSII, and subsequent electron acceptors. It shares a non-heme iron and each subunit binds pheophytin, quinone, additional chlorophylls, carotenoids and lipids. D1 provides most of the ligands for the Mn4-Ca-O5 cluster of the oxygen-evolving complex (OEC). There is also a Cl(-1) ion associated with D1 and D2, which is required for oxygen evolution. The PSII complex binds additional chlorophylls, carotenoids and specific lipids. as a cofactor. Tyr-161 forms a radical intermediate that is referred to as redox-active TyrZ, YZ or Y-Z. Post-translationally, C-terminally processed by CtpA; processing is essential to allow assembly of the oxygen-evolving complex and thus photosynthetic growth.

Its subcellular location is the cellular thylakoid membrane. The enzyme catalyses 2 a plastoquinone + 4 hnu + 2 H2O = 2 a plastoquinol + O2. Functionally, photosystem II (PSII) is a light-driven water:plastoquinone oxidoreductase that uses light energy to abstract electrons from H(2)O, generating O(2) and a proton gradient subsequently used for ATP formation. It consists of a core antenna complex that captures photons, and an electron transfer chain that converts photonic excitation into a charge separation. The D1/D2 (PsbA/PsbD) reaction center heterodimer binds P680, the primary electron donor of PSII as well as several subsequent electron acceptors. The protein is Photosystem II protein D1 2 of Synechococcus sp. (strain JA-2-3B'a(2-13)) (Cyanobacteria bacterium Yellowstone B-Prime).